Consider the following 386-residue polypeptide: MTIIVDYRFPPAINAEKQAKTIAIGQTAGTWSERHSHRQKQLQQHLAEVVGIREEADGYKVARVRFPQINVENDIASLLTMIFGKYSMAGAGKVVGVYLPESYGTKAKLGITGIRQRLGVYDRPLVMAIFKPALGLSAQDHADILREVAFAGLDVIKDDEIMADLPVAPTHERLDCCRRVLEEVRQQTGRNVLYAVNVTGKADELQRKARLLVKHGANALLLNVLTYGFSVLEALASDPAIDVPIFAHPAFAGAMCAGSDTGLAYSVVLGTMMAHAGADAVLYPAAYGSLPFDPQEEGKIRDILRDRNVFPVPSAGIRPGIVPQVLGDYGRNVILNAGTGIMDHPSGPASGVRAFFEALARIEAGESFDPANLPEGALKQAILEWG.

The Proton acceptor role is filled by lysine 85. Substrate contacts are provided by residues lysine 131, lysine 157 to glutamate 160, histidine 248, glycine 316, and glycine 338 to threonine 339. Residues lysine 157, aspartate 159, and glutamate 160 each contribute to the Mg(2+) site. Residue lysine 157 is modified to N6-carboxylysine.

This sequence belongs to the RuBisCO large chain family. Type IV subfamily. Homodimer. It depends on Mg(2+) as a cofactor.

The catalysed reaction is 5-methylsulfanyl-2,3-dioxopentyl phosphate = 2-hydroxy-5-methylsulfanyl-3-oxopent-1-enyl phosphate. The protein operates within amino-acid biosynthesis; L-methionine biosynthesis via salvage pathway; L-methionine from S-methyl-5-thio-alpha-D-ribose 1-phosphate: step 3/6. Catalyzes the enolization of 2,3-diketo-5-methylthiopentyl-1-phosphate (DK-MTP-1-P) into 2-hydroxy-3-keto-5-methylthiopentenyl-1-phosphate (HK-MTPenyl-1-P). The chain is 2,3-diketo-5-methylthiopentyl-1-phosphate enolase (mtnW) from Microcystis aeruginosa.